Here is a 74-residue protein sequence, read N- to C-terminus: Protein F9 homolog (74 aa).

Over 1-34 (GHAAANCALARVATALTRRVPASRHGLAEGGTPP) the chain is Virion surface. Residues 35 to 55 (WTLLLAVAAVAVLGVVAISLL) traverse the membrane as a helical segment. Residues 56–73 (RRALRIRFRYSKSIQTLR) are Intravirion-facing.

This sequence belongs to the chordopoxvirinae L1 protein family.

The protein resides in the virion membrane. The chain is Protein F9 homolog from Capra hircus (Goat).